The chain runs to 258 residues: Ribosomal RNA small subunit methyltransferase A (258 aa).

S-adenosyl-L-methionine contacts are provided by histidine 13, leucine 15, glycine 41, aspartate 63, aspartate 87, and asparagine 106.

This sequence belongs to the class I-like SAM-binding methyltransferase superfamily. rRNA adenine N(6)-methyltransferase family. RsmA subfamily.

The protein localises to the cytoplasm. The catalysed reaction is adenosine(1518)/adenosine(1519) in 16S rRNA + 4 S-adenosyl-L-methionine = N(6)-dimethyladenosine(1518)/N(6)-dimethyladenosine(1519) in 16S rRNA + 4 S-adenosyl-L-homocysteine + 4 H(+). In terms of biological role, specifically dimethylates two adjacent adenosines (A1518 and A1519) in the loop of a conserved hairpin near the 3'-end of 16S rRNA in the 30S particle. May play a critical role in biogenesis of 30S subunits. The protein is Ribosomal RNA small subunit methyltransferase A of Cytophaga hutchinsonii (strain ATCC 33406 / DSM 1761 / CIP 103989 / NBRC 15051 / NCIMB 9469 / D465).